We begin with the raw amino-acid sequence, 254 residues long: Triosephosphate isomerase (254 aa).

Residue 12-14 (NWK) participates in substrate binding. His-99 serves as the catalytic Electrophile. Glu-169 acts as the Proton acceptor in catalysis. Substrate-binding positions include Gly-175, Ser-214, and 235–236 (GG).

The protein belongs to the triosephosphate isomerase family. Homodimer.

The protein resides in the cytoplasm. The catalysed reaction is D-glyceraldehyde 3-phosphate = dihydroxyacetone phosphate. The protein operates within carbohydrate biosynthesis; gluconeogenesis. Its pathway is carbohydrate degradation; glycolysis; D-glyceraldehyde 3-phosphate from glycerone phosphate: step 1/1. Functionally, involved in the gluconeogenesis. Catalyzes stereospecifically the conversion of dihydroxyacetone phosphate (DHAP) to D-glyceraldehyde-3-phosphate (G3P). The polypeptide is Triosephosphate isomerase (Bartonella henselae (strain ATCC 49882 / DSM 28221 / CCUG 30454 / Houston 1) (Rochalimaea henselae)).